The sequence spans 196 residues: dTTP/UTP pyrophosphatase (196 aa).

The active-site Proton acceptor is the aspartate 72.

Belongs to the Maf family. YhdE subfamily. A divalent metal cation is required as a cofactor.

Its subcellular location is the cytoplasm. The catalysed reaction is dTTP + H2O = dTMP + diphosphate + H(+). The enzyme catalyses UTP + H2O = UMP + diphosphate + H(+). In terms of biological role, nucleoside triphosphate pyrophosphatase that hydrolyzes dTTP and UTP. May have a dual role in cell division arrest and in preventing the incorporation of modified nucleotides into cellular nucleic acids. This chain is dTTP/UTP pyrophosphatase, found in Chlamydia felis (strain Fe/C-56) (Chlamydophila felis).